Here is a 319-residue protein sequence, read N- to C-terminus: MTEQGMHQELREGAGTAGDEGGLEAAAMDGGADNGIDVVLVTGLSGAGRGTAAKVLEDLGWYVADNLPPELIAQMVDLGLAAGSRITQLAVVMDVRSRGFTGDLDWVRTELATRNIVPRVLFLEASDDILVRRYEQNRRSHPLQGNQTLAEGIAAERTMLAPVRASADLVIDTSSLSVHALRDSIERAFAGETVAHTNVTVESFGYKYGLPMDADTVMDVRFLPNPHWVDRLRPNTGQHHEVRDYVLGQPGALEFLDSYHQLLDVVIDGYRREGKRYMTVAIGCTGGKHRSVAMAEALAERLQDSDLTVRVLHRDLGRE.

Residues 1-12 (MTEQGMHQELRE) are compositionally biased toward basic and acidic residues. The disordered stretch occupies residues 1-26 (MTEQGMHQELREGAGTAGDEGGLEAA). 43 to 50 (GLSGAGRG) contacts ATP. 94–97 (DVRS) is a GTP binding site.

This sequence belongs to the RapZ-like family.

In terms of biological role, displays ATPase and GTPase activities. The polypeptide is Nucleotide-binding protein Mvan_2698 (Mycolicibacterium vanbaalenii (strain DSM 7251 / JCM 13017 / BCRC 16820 / KCTC 9966 / NRRL B-24157 / PYR-1) (Mycobacterium vanbaalenii)).